The following is a 268-amino-acid chain: UPF0328 protein ECU05_1640/ECU11_0090 (268 aa).

It belongs to the UPF0328 family.

The sequence is that of UPF0328 protein ECU05_1640/ECU11_0090 from Encephalitozoon cuniculi (strain GB-M1) (Microsporidian parasite).